The chain runs to 163 residues: MPSFDVVSKVDLQEVDNVVNNVKKEVDTRYDFRGSNTELSFDKGGASISILASDDMKMRAVQEMLLANCVRRKVDPKFLDFGKVEAASKGMVKRSVAVKDGISKETAQKIVKKIKASKLKVQAAIQDDQVRVTGKKIDDLQDVIQLLRDDDFGVPLQFINMRS.

The protein belongs to the YajQ family.

Its function is as follows. Nucleotide-binding protein. The polypeptide is Nucleotide-binding protein Dde_2479 (Oleidesulfovibrio alaskensis (strain ATCC BAA-1058 / DSM 17464 / G20) (Desulfovibrio alaskensis)).